Reading from the N-terminus, the 463-residue chain is tRNA modification GTPase MnmE (463 aa).

Residues arginine 29, glutamate 91, and arginine 130 each coordinate (6S)-5-formyl-5,6,7,8-tetrahydrofolate. Positions glycine 225 to glutamine 384 constitute a TrmE-type G domain. Residue asparagine 235 participates in K(+) binding. GTP-binding positions include asparagine 235–serine 240, threonine 254–threonine 260, and aspartate 279–glycine 282. Residue serine 239 coordinates Mg(2+). 3 residues coordinate K(+): threonine 254, leucine 256, and threonine 259. Threonine 260 contributes to the Mg(2+) binding site. Lysine 463 lines the (6S)-5-formyl-5,6,7,8-tetrahydrofolate pocket.

It belongs to the TRAFAC class TrmE-Era-EngA-EngB-Septin-like GTPase superfamily. TrmE GTPase family. As to quaternary structure, homodimer. Heterotetramer of two MnmE and two MnmG subunits. K(+) is required as a cofactor.

It is found in the cytoplasm. Functionally, exhibits a very high intrinsic GTPase hydrolysis rate. Involved in the addition of a carboxymethylaminomethyl (cmnm) group at the wobble position (U34) of certain tRNAs, forming tRNA-cmnm(5)s(2)U34. This Trichormus variabilis (strain ATCC 29413 / PCC 7937) (Anabaena variabilis) protein is tRNA modification GTPase MnmE.